The sequence spans 59 residues: Large ribosomal subunit protein uL30 (59 aa).

The protein belongs to the universal ribosomal protein uL30 family. As to quaternary structure, part of the 50S ribosomal subunit.

In Aliivibrio fischeri (strain MJ11) (Vibrio fischeri), this protein is Large ribosomal subunit protein uL30.